Here is a 179-residue protein sequence, read N- to C-terminus: ATP synthase subunit b, chloroplastic (179 aa).

A helical transmembrane segment spans residues 28 to 46 (LLNILALVAILVYTGKDFL).

The protein belongs to the ATPase B chain family. F-type ATPases have 2 components, F(1) - the catalytic core - and F(0) - the membrane proton channel. F(1) has five subunits: alpha(3), beta(3), gamma(1), delta(1), epsilon(1). F(0) has four main subunits: a(1), b(1), b'(1) and c(10-14). The alpha and beta chains form an alternating ring which encloses part of the gamma chain. F(1) is attached to F(0) by a central stalk formed by the gamma and epsilon chains, while a peripheral stalk is formed by the delta, b and b' chains.

Its subcellular location is the plastid. It localises to the chloroplast thylakoid membrane. In terms of biological role, f(1)F(0) ATP synthase produces ATP from ADP in the presence of a proton or sodium gradient. F-type ATPases consist of two structural domains, F(1) containing the extramembraneous catalytic core and F(0) containing the membrane proton channel, linked together by a central stalk and a peripheral stalk. During catalysis, ATP synthesis in the catalytic domain of F(1) is coupled via a rotary mechanism of the central stalk subunits to proton translocation. Its function is as follows. Component of the F(0) channel, it forms part of the peripheral stalk, linking F(1) to F(0). The sequence is that of ATP synthase subunit b, chloroplastic from Thalassiosira pseudonana (Marine diatom).